The chain runs to 356 residues: Glutamine synthetase nodule isozyme (356 aa).

The 81-residue stretch at 19-99 (IIAEYIWIGG…VMCDAYTPAG (81 aa)) folds into the GS beta-grasp domain. A disordered region spans residues 41–66 (PGPVSDPSKLPKWNYDGSSTGQAPGE). Residues 106–356 (KRHNAAKIFS…IADTTILWKP (251 aa)) enclose the GS catalytic domain.

It belongs to the glutamine synthetase family. Homooctamer.

It is found in the cytoplasm. It catalyses the reaction L-glutamate + NH4(+) + ATP = L-glutamine + ADP + phosphate + H(+). This Vigna aconitifolia (Moth bean) protein is Glutamine synthetase nodule isozyme.